The following is a 76-amino-acid chain: Sec-independent protein translocase protein TatA (76 aa).

The helical transmembrane segment at 1 to 21 (MGGLSIWHWLIVLLIVALVFG) threads the bilayer. The segment at 43–76 (MKDGDAPADAQQLPRSGTVDVNAKEATRSDSNKA) is disordered. A compositionally biased stretch (basic and acidic residues) spans 64–76 (NAKEATRSDSNKA).

This sequence belongs to the TatA/E family. In terms of assembly, the Tat system comprises two distinct complexes: a TatABC complex, containing multiple copies of TatA, TatB and TatC subunits, and a separate TatA complex, containing only TatA subunits. Substrates initially bind to the TatABC complex, which probably triggers association of the separate TatA complex to form the active translocon.

It localises to the cell inner membrane. Functionally, part of the twin-arginine translocation (Tat) system that transports large folded proteins containing a characteristic twin-arginine motif in their signal peptide across membranes. TatA could form the protein-conducting channel of the Tat system. In Burkholderia multivorans (strain ATCC 17616 / 249), this protein is Sec-independent protein translocase protein TatA.